The following is a 118-amino-acid chain: Ribonuclease P protein component 2 (118 aa).

It belongs to the eukaryotic/archaeal RNase P protein component 2 family. In terms of assembly, consists of a catalytic RNA component and at least 4-5 protein subunits.

It localises to the cytoplasm. The enzyme catalyses Endonucleolytic cleavage of RNA, removing 5'-extranucleotides from tRNA precursor.. Functionally, part of ribonuclease P, a protein complex that generates mature tRNA molecules by cleaving their 5'-ends. In Pyrococcus abyssi (strain GE5 / Orsay), this protein is Ribonuclease P protein component 2.